We begin with the raw amino-acid sequence, 266 residues long: Hydroxyethylthiazole kinase (266 aa).

Residue Met-43 participates in substrate binding. 2 residues coordinate ATP: Arg-119 and Thr-166. Gly-193 contacts substrate.

Belongs to the Thz kinase family. Requires Mg(2+) as cofactor.

It carries out the reaction 5-(2-hydroxyethyl)-4-methylthiazole + ATP = 4-methyl-5-(2-phosphooxyethyl)-thiazole + ADP + H(+). Its pathway is cofactor biosynthesis; thiamine diphosphate biosynthesis; 4-methyl-5-(2-phosphoethyl)-thiazole from 5-(2-hydroxyethyl)-4-methylthiazole: step 1/1. Functionally, catalyzes the phosphorylation of the hydroxyl group of 4-methyl-5-beta-hydroxyethylthiazole (THZ). The sequence is that of Hydroxyethylthiazole kinase from Methanococcus maripaludis (strain C5 / ATCC BAA-1333).